The chain runs to 180 residues: Adenine phosphoribosyltransferase (180 aa).

The protein belongs to the purine/pyrimidine phosphoribosyltransferase family. As to quaternary structure, homodimer.

The protein localises to the cytoplasm. The enzyme catalyses AMP + diphosphate = 5-phospho-alpha-D-ribose 1-diphosphate + adenine. Its pathway is purine metabolism; AMP biosynthesis via salvage pathway; AMP from adenine: step 1/1. Its function is as follows. Catalyzes a salvage reaction resulting in the formation of AMP, that is energically less costly than de novo synthesis. This Mycoplasma genitalium (strain ATCC 33530 / DSM 19775 / NCTC 10195 / G37) (Mycoplasmoides genitalium) protein is Adenine phosphoribosyltransferase.